Here is a 463-residue protein sequence, read N- to C-terminus: Glycerol-3-phosphate acyltransferase, chloroplastic (463 aa).

The transit peptide at 1–91 (MSIFFSPSSP…AATQPSAGSD (91 aa)) directs the protein to the chloroplast. Disordered stretches follow at residues 18-37 (NANPRVSPSSSPSSAFTPPL) and 65-95 (AETVHGNKWPSPSSSSSAATQPSAGSDHGHS). Low complexity-rich tracts occupy residues 24-37 (SPSSSPSSAFTPPL) and 74-90 (PSPSSSSSAATQPSAGS). The HXXXXD motif motif lies at 229–234 (HQTEAD).

It belongs to the GPAT/DAPAT family.

It is found in the plastid. The protein localises to the chloroplast stroma. The catalysed reaction is sn-glycerol 3-phosphate + an acyl-CoA = a 1-acyl-sn-glycero-3-phosphate + CoA. Its pathway is phospholipid metabolism; CDP-diacylglycerol biosynthesis; CDP-diacylglycerol from sn-glycerol 3-phosphate: step 1/3. In terms of biological role, esterifies acyl-group from acyl-ACP to the sn-1 position of glycerol-3-phosphate. The enzyme from chilling-resistant plants discriminates against non-fluid palmitic acid and selects oleic acid whereas the enzyme from sensitive plants accepts both fatty acids. The protein is Glycerol-3-phosphate acyltransferase, chloroplastic of Carthamus tinctorius (Safflower).